Here is a 189-residue protein sequence, read N- to C-terminus: Alkyl hydroperoxide reductase C (189 aa).

In terms of domain architecture, Thioredoxin spans 2 to 159; sequence SLINKEILPF…LVNKIKAAQY (158 aa). Residue cysteine 49 is the Cysteine sulfenic acid (-SOH) intermediate of the active site.

The protein belongs to the peroxiredoxin family. AhpC/Prx1 subfamily. As to quaternary structure, homodimer; disulfide-linked, upon oxidation. 5 homodimers assemble to form a ring-like decamer.

It is found in the cytoplasm. It carries out the reaction a hydroperoxide + NADH + H(+) = an alcohol + NAD(+) + H2O. Functionally, thiol-specific peroxidase that catalyzes the reduction of hydrogen peroxide and organic hydroperoxides to water and alcohols, respectively. Plays a role in cell protection against oxidative stress by detoxifying peroxides. The sequence is that of Alkyl hydroperoxide reductase C (ahpC) from Staphylococcus epidermidis (strain ATCC 12228 / FDA PCI 1200).